A 516-amino-acid polypeptide reads, in one-letter code: Phosphatidylserine decarboxylase proenzyme 2, mitochondrial (516 aa).

The N-terminal 21 residues, 1–21 (MRPRQRFRRFHPRWSKVNLRG), are a transit peptide targeting the mitochondrion. Residues 22-33 (FGGVGALKGVKA) are Mitochondrial matrix-facing. The helical transmembrane segment at 34 to 52 (LNGMNVRVSMRLKWISNRI) threads the bilayer. Topologically, residues 53 to 516 (HRIRRSRRLG…GQYVRVGEAL (464 aa)) are mitochondrial intermembrane. Catalysis depends on charge relay system; for autoendoproteolytic cleavage activity residues aspartate 159, histidine 373, and serine 488. Serine 488 acts as the Schiff-base intermediate with substrate; via pyruvic acid; for decarboxylase activity in catalysis. Serine 488 carries the post-translational modification Pyruvic acid (Ser); by autocatalysis.

It belongs to the phosphatidylserine decarboxylase family. PSD-B subfamily. Eukaryotic type I sub-subfamily. Heterodimer of a large membrane-associated beta subunit and a small pyruvoyl-containing alpha subunit. Pyruvate is required as a cofactor. Post-translationally, is synthesized initially as an inactive proenzyme. Formation of the active enzyme involves a self-maturation process in which the active site pyruvoyl group is generated from an internal serine residue via an autocatalytic post-translational modification. Two non-identical subunits are generated from the proenzyme in this reaction, and the pyruvate is formed at the N-terminus of the alpha chain, which is derived from the carboxyl end of the proenzyme. The autoendoproteolytic cleavage occurs by a canonical serine protease mechanism, in which the side chain hydroxyl group of the serine supplies its oxygen atom to form the C-terminus of the beta chain, while the remainder of the serine residue undergoes an oxidative deamination to produce ammonia and the pyruvoyl prosthetic group on the alpha chain. During this reaction, the Ser that is part of the protease active site of the proenzyme becomes the pyruvoyl prosthetic group, which constitutes an essential element of the active site of the mature decarboxylase.

The protein resides in the mitochondrion. It is found in the mitochondrion inner membrane. Its subcellular location is the nucleus envelope. The protein localises to the lipid droplet. It localises to the endoplasmic reticulum membrane. It catalyses the reaction a 1,2-diacyl-sn-glycero-3-phospho-L-serine + H(+) = a 1,2-diacyl-sn-glycero-3-phosphoethanolamine + CO2. Its pathway is phospholipid metabolism; phosphatidylethanolamine biosynthesis; phosphatidylethanolamine from CDP-diacylglycerol: step 2/2. Its function is as follows. Catalyzes the formation of phosphatidylethanolamine (PtdEtn) from phosphatidylserine (PtdSer). Plays a central role in phospholipid metabolism and in the interorganelle trafficking of phosphatidylserine. Together with psd1 and psd3, responsible for the majority of phosphatidylethanolamine synthesis. Plays a role in lipid droplet biogenesis at the endoplasmic reticulum membrane. This is Phosphatidylserine decarboxylase proenzyme 2, mitochondrial from Schizosaccharomyces pombe (strain 972 / ATCC 24843) (Fission yeast).